The sequence spans 62 residues: UPF0434 protein Rpic_2808 (62 aa).

This sequence belongs to the UPF0434 family.

The chain is UPF0434 protein Rpic_2808 from Ralstonia pickettii (strain 12J).